Reading from the N-terminus, the 482-residue chain is Lipoamide acyltransferase component of branched-chain alpha-keto acid dehydrogenase complex, mitochondrial (482 aa).

Residues 1 to 61 (MAAALVLRTW…QWLKTTAALQ (61 aa)) constitute a mitochondrion transit peptide. Positions 64–139 (IVQFKLSDIG…YVGKPLVDIE (76 aa)) constitute a Lipoyl-binding domain. An N6-lipoyllysine modification is found at lysine 105. At lysine 133 the chain carries N6-succinyllysine. Residues 145 to 160 (DSEEDVVETPAVSHDE) are critical for association with PPM1K. The disordered stretch occupies residues 146–171 (SEEDVVETPAVSHDEHTHQEIKGQKT). Positions 157–168 (SHDEHTHQEIKG) are enriched in basic and acidic residues. A Peripheral subunit-binding (PSBD) domain is found at 172 to 209 (LATPAVRRLAMENNIKLSEVIGSGKDGRILKEDILNYL). Lysine 196 carries the N6-acetyllysine; alternate modification. Lysine 196 is modified (N6-succinyllysine; alternate). Lysine 202 bears the N6-acetyllysine mark. Residues 218 to 230 (PPSPKAEIMPPPP) show a composition bias toward pro residues. The interval 218 to 238 (PPSPKAEIMPPPPKPKDRTIP) is disordered. Phosphoserine is present on serine 220. N6-acetyllysine is present on residues lysine 243 and lysine 250. Residue lysine 261 is modified to N6-succinyllysine. An N6-acetyllysine; alternate modification is found at lysine 289. The residue at position 289 (lysine 289) is an N6-succinyllysine; alternate. Residue arginine 291 participates in CoA binding. N6-acetyllysine occurs at positions 295 and 304. The CoA site is built by serine 306, aspartate 349, glutamine 378, serine 399, asparagine 400, serine 403, glycine 424, and isoleucine 426. At lysine 435 the chain carries N6-acetyllysine. The residue at position 440 (lysine 440) is an N6-acetyllysine; alternate. Lysine 440 carries the N6-succinyllysine; alternate modification. Catalysis depends on residues histidine 452 and aspartate 456.

This sequence belongs to the 2-oxoacid dehydrogenase family. As to quaternary structure, forms a 24-polypeptide structural core with octahedral symmetry that represents the E2 component of the branched-chain alpha-ketoacid dehydrogenase (BCKDH) complex. The BCKDH complex is composed of three major building blocks E1, E2 and E3. It is organized around E2, a 24-meric cubic core composed of DBT, to which are associated 6 to 12 copies of E1, and approximately 6 copies of the dehydrogenase E3, a DLD dimer. Interacts with PPM1K with a 24:1 stoichiometry; the N-terminal region (residues 49-61) of PPM1K and C-terminal linker of the lipoyl domain of DBT/E2 (residues 145-160) are critical for this interaction whereas the lipoyl prosthetic group is dispensable. This interaction requires colocalization in mitochondria. PPM1K competes with BCKDK for binding to DBT; this interaction is modulated by branched-chain alpha-keto acids (BCKAs). At steady state, BCKDH holoenzyme preferentially binds BCKDK and BCKDHA is phosphorylated. In response to high levels of BCKAs, BCKDK is replaced by PPM1K leading to BCKDHA dephosphorylation. (R)-lipoate serves as cofactor. Expressed in kidney (at protein level).

Its subcellular location is the mitochondrion matrix. It carries out the reaction N(6)-[(R)-dihydrolipoyl]-L-lysyl-[protein] + 2-methylpropanoyl-CoA = N(6)-[(R)-S(8)-2-methylpropanoyldihydrolipoyl]-L-lysyl-[protein] + CoA. In terms of biological role, the branched-chain alpha-keto dehydrogenase complex catalyzes the overall conversion of alpha-keto acids to acyl-CoA and CO(2). It contains multiple copies of three enzymatic components: branched-chain alpha-keto acid decarboxylase (E1), lipoamide acyltransferase (E2) and lipoamide dehydrogenase (E3). Within this complex, the catalytic function of this enzyme is to accept, and to transfer to coenzyme A, acyl groups that are generated by the branched-chain alpha-keto acid decarboxylase component. This is Lipoamide acyltransferase component of branched-chain alpha-keto acid dehydrogenase complex, mitochondrial (DBT) from Bos taurus (Bovine).